The primary structure comprises 122 residues: Ubiquitin-related modifier 1 (122 aa).

Positions 33 to 48 (PSTVPADNNTSVTTKD) are enriched in polar residues. Residues 33-52 (PSTVPADNNTSVTTKDAASP) form a disordered region. Position 122 is a 1-thioglycine (glycine 122). A Glycyl lysine isopeptide (Gly-Lys) (interchain with K-? in acceptor proteins) cross-link involves residue glycine 122.

This sequence belongs to the URM1 family. C-terminal thiocarboxylation occurs in 2 steps, it is first acyl-adenylated (-COAMP) via the hesA/moeB/thiF part of UBA4, then thiocarboxylated (-COSH) via the rhodanese domain of UBA4.

The protein localises to the cytoplasm. The protein operates within tRNA modification; 5-methoxycarbonylmethyl-2-thiouridine-tRNA biosynthesis. Functionally, acts as a sulfur carrier required for 2-thiolation of mcm(5)S(2)U at tRNA wobble positions of cytosolic tRNA(Lys), tRNA(Glu) and tRNA(Gln). Serves as sulfur donor in tRNA 2-thiolation reaction by being thiocarboxylated (-COSH) at its C-terminus by the MOCS3 homolog UBA4. The sulfur is then transferred to tRNA to form 2-thiolation of mcm(5)S(2)U. Prior mcm(5) tRNA modification by the elongator complex is required for 2-thiolation. Also acts as a ubiquitin-like protein (UBL) that is covalently conjugated via an isopeptide bond to lysine residues of target proteins such as AHP1. The thiocarboxylated form serves as substrate for conjugation and oxidative stress specifically induces the formation of UBL-protein conjugates. The protein is Ubiquitin-related modifier 1 of Laccaria bicolor (strain S238N-H82 / ATCC MYA-4686) (Bicoloured deceiver).